The primary structure comprises 160 residues: Large ribosomal subunit protein uL22c (160 aa).

The protein belongs to the universal ribosomal protein uL22 family. In terms of assembly, part of the 50S ribosomal subunit.

The protein localises to the plastid. The protein resides in the chloroplast. This protein binds specifically to 23S rRNA. In terms of biological role, the globular domain of the protein is located near the polypeptide exit tunnel on the outside of the subunit, while an extended beta-hairpin is found that lines the wall of the exit tunnel in the center of the 70S ribosome. The protein is Large ribosomal subunit protein uL22c (rpl22) of Arabidopsis thaliana (Mouse-ear cress).